The primary structure comprises 60 residues: Small ribosomal subunit protein eS17 (60 aa).

Belongs to the eukaryotic ribosomal protein eS17 family.

The polypeptide is Small ribosomal subunit protein eS17 (Methanosphaera stadtmanae (strain ATCC 43021 / DSM 3091 / JCM 11832 / MCB-3)).